Reading from the N-terminus, the 441-residue chain is Protein translocase subunit SecY (441 aa).

The next 10 helical transmembrane spans lie at 25 to 45 (YFVIFSLIVFRMGSYIPIPGI), 78 to 98 (IFALGIMPFISSSIIVQILTL), 126 to 146 (LILAALQSFGMSISLPNIPGL), 155 to 175 (ISFYGIAIISLITGTIFLMWL), 184 to 204 (IGNGISIIIFSGIVSGLPSSF), 218 to 238 (VLLFCFIGIVIFLVTLLVVYI), 275 to 295 (VIPAIFASSIVLFPATIASWF), 318 to 338 (YILTYITAIIFFCFFYTGLAF), 376 to 396 (FLGSMYMAFICLVPELMRFFM), and 398 to 418 (VPFYFGGTSLLIIVVVIIDFI).

This sequence belongs to the SecY/SEC61-alpha family. Component of the Sec protein translocase complex. Heterotrimer consisting of SecY, SecE and SecG subunits. The heterotrimers can form oligomers, although 1 heterotrimer is thought to be able to translocate proteins. Interacts with the ribosome. Interacts with SecDF, and other proteins may be involved. Interacts with SecA.

The protein resides in the cell membrane. In terms of biological role, the central subunit of the protein translocation channel SecYEG. Consists of two halves formed by TMs 1-5 and 6-10. These two domains form a lateral gate at the front which open onto the bilayer between TMs 2 and 7, and are clamped together by SecE at the back. The channel is closed by both a pore ring composed of hydrophobic SecY resides and a short helix (helix 2A) on the extracellular side of the membrane which forms a plug. The plug probably moves laterally to allow the channel to open. The ring and the pore may move independently. This chain is Protein translocase subunit SecY, found in Buchnera aphidicola subsp. Baizongia pistaciae (strain Bp).